A 164-amino-acid chain; its full sequence is Bacterial ferritin (164 aa).

The 147-residue stretch at methionine 1–glycine 147 folds into the Ferritin-like diiron domain. Positions 18, 51, 54, 94, 129, and 132 each coordinate Fe cation.

Belongs to the bacterioferritin family. Heterooligomer of 24 subunits, arranged as 12 dimers, that are packed together to form an approximately spherical molecule with a central cavity, in which large amounts of iron can be deposited.

The enzyme catalyses 4 Fe(2+) + O2 + 4 H(+) = 4 Fe(3+) + 2 H2O. It carries out the reaction Fe(2+)(in) = Fe(2+)(out). Iron-storage protein, whose ferroxidase center binds Fe(2+), oxidizes it using dioxygen to Fe(3+), and participates in the subsequent Fe(3+) oxide mineral core formation within the central cavity of the BFR protein shell. This is Bacterial ferritin from Paramagnetospirillum magnetotacticum (Aquaspirillum magnetotacticum).